The sequence spans 515 residues: ATP synthase subunit alpha (515 aa).

ATP is bound at residue 171–178 (GDRQTGKT).

This sequence belongs to the ATPase alpha/beta chains family. F-type ATPases have 2 components, CF(1) - the catalytic core - and CF(0) - the membrane proton channel. CF(1) has five subunits: alpha(3), beta(3), gamma(1), delta(1), epsilon(1). CF(0) has three main subunits: a(1), b(2) and c(9-12). The alpha and beta chains form an alternating ring which encloses part of the gamma chain. CF(1) is attached to CF(0) by a central stalk formed by the gamma and epsilon chains, while a peripheral stalk is formed by the delta and b chains.

Its subcellular location is the cell inner membrane. It carries out the reaction ATP + H2O + 4 H(+)(in) = ADP + phosphate + 5 H(+)(out). Produces ATP from ADP in the presence of a proton gradient across the membrane. The alpha chain is a regulatory subunit. The polypeptide is ATP synthase subunit alpha (Xanthomonas campestris pv. campestris (strain 8004)).